The primary structure comprises 318 residues: Ribosomal protein L11 methyltransferase (318 aa).

Residues Thr159, Gly180, Asp202, and Asn253 each coordinate S-adenosyl-L-methionine.

The protein belongs to the methyltransferase superfamily. PrmA family.

The protein localises to the cytoplasm. It catalyses the reaction L-lysyl-[protein] + 3 S-adenosyl-L-methionine = N(6),N(6),N(6)-trimethyl-L-lysyl-[protein] + 3 S-adenosyl-L-homocysteine + 3 H(+). Methylates ribosomal protein L11. In Lachnospira eligens (strain ATCC 27750 / DSM 3376 / VPI C15-48 / C15-B4) (Eubacterium eligens), this protein is Ribosomal protein L11 methyltransferase.